The following is a 96-amino-acid chain: Large ribosomal subunit protein eL14 (96 aa).

This sequence belongs to the eukaryotic ribosomal protein eL14 family.

The polypeptide is Large ribosomal subunit protein eL14 (Saccharolobus solfataricus (strain ATCC 35092 / DSM 1617 / JCM 11322 / P2) (Sulfolobus solfataricus)).